We begin with the raw amino-acid sequence, 603 residues long: Proline--tRNA ligase (603 aa).

Belongs to the class-II aminoacyl-tRNA synthetase family. ProS type 1 subfamily. As to quaternary structure, homodimer.

It is found in the cytoplasm. The enzyme catalyses tRNA(Pro) + L-proline + ATP = L-prolyl-tRNA(Pro) + AMP + diphosphate. In terms of biological role, catalyzes the attachment of proline to tRNA(Pro) in a two-step reaction: proline is first activated by ATP to form Pro-AMP and then transferred to the acceptor end of tRNA(Pro). As ProRS can inadvertently accommodate and process non-cognate amino acids such as alanine and cysteine, to avoid such errors it has two additional distinct editing activities against alanine. One activity is designated as 'pretransfer' editing and involves the tRNA(Pro)-independent hydrolysis of activated Ala-AMP. The other activity is designated 'posttransfer' editing and involves deacylation of mischarged Ala-tRNA(Pro). The misacylated Cys-tRNA(Pro) is not edited by ProRS. This is Proline--tRNA ligase from Microcystis aeruginosa (strain NIES-843 / IAM M-2473).